The following is a 310-amino-acid chain: MKLLKASLVALSLAASTFVYADNGLIAIITPSHDNPFFKAEADGAKQKAEELGYTTLVASHDDDANKQDQLISTAVSRKAKAIILDNAGSDVTVGALEKAKAAGVPAFLIDREINKTGVAVSQIVSNNYQGAQLSAEKFVELMGEKGQYVELLGRESDTNASVRSQGFHEIIDEYPEMKMVAQQTANWSQTEGFSRMESILQANPNIKGVISGNDTMALGAEAALKAAGRTDVIVVGFDGSDYVRDSILAGGNIKATALQPAWDQAQEAVVQADKYIRTGSTGKEEKQLMDCILIDSSNAKKLNKFSLSK.

Residues 1–21 (MKLLKASLVALSLAASTFVYA) form the signal peptide. D-apiofuranose contacts are provided by residues N35, 111–112 (DR), 158–160 (DTN), R164, N214, D239, and Q260.

The protein belongs to the bacterial solute-binding protein 2 family.

It is found in the periplasm. Functionally, part of an ABC transporter complex involved in D-apiose import. Binds D-apiose, D-ribose and D-ribulose. The polypeptide is D-apiose import binding protein (Actinobacillus succinogenes (strain ATCC 55618 / DSM 22257 / CCUG 43843 / 130Z)).